The following is a 143-amino-acid chain: Photosystem I reaction center subunit IV B, chloroplastic (143 aa).

The N-terminal 51 residues, 1–51 (MASSSMASAASGFMVATPNIATSNTAPRTSMLFFSSSKNNTTTNFPRLVVR), are a transit peptide targeting the chloroplast. A compositionally biased stretch (low complexity) spans 56–75 (AAPPAATATAEGEAPPAKAA). The tract at residues 56-86 (AAPPAATATAEGEAPPAKAAKPPPIGPKRGT) is disordered.

The protein belongs to the PsaE family. 2 isoforms exists (ratio 1:1). With or without the N-terminal alanine.

It is found in the plastid. The protein resides in the chloroplast thylakoid membrane. Functionally, stabilizes the interaction between PsaC and the PSI core, assists the docking of the ferredoxin to PSI and interacts with ferredoxin-NADP oxidoreductase. The sequence is that of Photosystem I reaction center subunit IV B, chloroplastic (PSAEB) from Nicotiana sylvestris (Wood tobacco).